A 99-amino-acid polypeptide reads, in one-letter code: MKIPVLPAVVLLSLLALHSAQGASLGSSEEETTIGNYAAGPEAFNAQFLNIDKLRSAFKPDEFLNWHALFESIKRKLPFLNWDALPKLKGLRSATPDAQ.

An N-terminal signal peptide occupies residues 1–22; it reads MKIPVLPAVVLLSLLALHSAQG.

Highly expressed in skin, but not detectable in any other tissue examined. Expression restricted to cornified/stratified epithelia and not detected in non-cornified/stratified epithelia.

Its subcellular location is the secreted. Its function is as follows. May act as a soluble regulator of keratinocyte differentiation. May play an important role in embryonic skin morphogenesis. This is Keratinocyte differentiation-associated protein from Canis lupus familiaris (Dog).